A 277-amino-acid polypeptide reads, in one-letter code: Bifunctional protein FolD (277 aa).

NADP(+) is bound by residues 160–162 (GAS), Ser-185, and Ile-226.

It belongs to the tetrahydrofolate dehydrogenase/cyclohydrolase family. In terms of assembly, homodimer.

The enzyme catalyses (6R)-5,10-methylene-5,6,7,8-tetrahydrofolate + NADP(+) = (6R)-5,10-methenyltetrahydrofolate + NADPH. It catalyses the reaction (6R)-5,10-methenyltetrahydrofolate + H2O = (6R)-10-formyltetrahydrofolate + H(+). The protein operates within one-carbon metabolism; tetrahydrofolate interconversion. In terms of biological role, catalyzes the oxidation of 5,10-methylenetetrahydrofolate to 5,10-methenyltetrahydrofolate and then the hydrolysis of 5,10-methenyltetrahydrofolate to 10-formyltetrahydrofolate. The chain is Bifunctional protein FolD from Vesicomyosocius okutanii subsp. Calyptogena okutanii (strain HA).